A 173-amino-acid polypeptide reads, in one-letter code: Alpha-crystallin A chain (173 aa).

Methionine 1 carries the N-acetylmethionine modification. Positions 1 to 63 are required for complex formation with BFSP1 and BFSP2; that stretch reads MDVTIQHPWF…RTVLDSGVSE (63 aa). Glutamine 6 is modified (deamidated glutamine; partial). At serine 45 the chain carries Phosphoserine. Glutamine 50 bears the Deamidated glutamine; partial mark. Residues 52 to 162 form the sHSP domain; that stretch reads LFRTVLDSGV…GHSERAIPVS (111 aa). Lysine 70 bears the N6-acetyllysine mark. Glutamine 90 is modified (deamidated glutamine; partial). Lysine 99 is subject to N6-acetyllysine. A Zn(2+)-binding site is contributed by histidine 100. Asparagine 101 carries the deamidated asparagine; partial modification. The Zn(2+) site is built by glutamate 102 and histidine 107. The residue at position 122 (serine 122) is a Phosphoserine. At asparagine 123 the chain carries Deamidated asparagine; partial. The tract at residues 144–173 is disordered; that stretch reads PKVQSGLDAGHSERAIPVSREEKPSSAPSS. Glutamine 147 is modified (deamidated glutamine; partial). Positions 153 to 167 are enriched in basic and acidic residues; it reads GHSERAIPVSREEKP. Zn(2+) is bound at residue histidine 154. Serine 162 is a glycosylation site (O-linked (GlcNAc) serine).

This sequence belongs to the small heat shock protein (HSP20) family. Heteromer composed of three CRYAA and one CRYAB subunits. Inter-subunit bridging via zinc ions enhances stability, which is crucial as there is no protein turn over in the lens. Can also form homodimers and homotetramers (dimers of dimers) which serve as the building blocks of homooligomers. Within homooligomers, the zinc-binding motif is created from residues of 3 different molecules. His-100 and Glu-102 from one molecule are ligands of the zinc ion, and His-107 and His-154 residues from additional molecules complete the site with tetrahedral coordination geometry. Part of a complex required for lens intermediate filament formation composed of BFSP1, BFSP2 and CRYAA. Acetylation at Lys-70 may increase chaperone activity. In terms of processing, undergoes age-dependent proteolytical cleavage at the C-terminus.

The protein localises to the cytoplasm. Its subcellular location is the nucleus. Contributes to the transparency and refractive index of the lens. Acts as a chaperone, preventing aggregation of various proteins under a wide range of stress conditions. Required for the correct formation of lens intermediate filaments as part of a complex composed of BFSP1, BFSP2 and CRYAA. This Otolemur crassicaudatus (Brown greater galago) protein is Alpha-crystallin A chain (CRYAA).